The chain runs to 210 residues: MKSMMEPQGLGLVPMVVEQSGRGERAYDIYSRLLKERIVFLVGPVTDESANLVVAQMLFLESENPDKDIHFYINSPGGSITAGMSIYDTMNFIKPDVSTLCIGQAASMGAFLLAAGTHGKRFALENSRVMIHQPLLYGGGLSGQVTDIEIHARELVKVKAKMNELLAKHSGQTLERVQSDTERDNFMSAEEARAYGMIDKVLSSRRDVTA.

The Nucleophile role is filled by S107. H132 is a catalytic residue.

It belongs to the peptidase S14 family. Fourteen ClpP subunits assemble into 2 heptameric rings which stack back to back to give a disk-like structure with a central cavity, resembling the structure of eukaryotic proteasomes.

The protein resides in the cytoplasm. It carries out the reaction Hydrolysis of proteins to small peptides in the presence of ATP and magnesium. alpha-casein is the usual test substrate. In the absence of ATP, only oligopeptides shorter than five residues are hydrolyzed (such as succinyl-Leu-Tyr-|-NHMec, and Leu-Tyr-Leu-|-Tyr-Trp, in which cleavage of the -Tyr-|-Leu- and -Tyr-|-Trp bonds also occurs).. Cleaves peptides in various proteins in a process that requires ATP hydrolysis. Has a chymotrypsin-like activity. Plays a major role in the degradation of misfolded proteins. The protein is ATP-dependent Clp protease proteolytic subunit of Chromobacterium violaceum (strain ATCC 12472 / DSM 30191 / JCM 1249 / CCUG 213 / NBRC 12614 / NCIMB 9131 / NCTC 9757 / MK).